The primary structure comprises 123 residues: Large ribosomal subunit protein uL14 (123 aa).

The protein belongs to the universal ribosomal protein uL14 family. As to quaternary structure, part of the 50S ribosomal subunit. Forms a cluster with proteins L3 and L19. In the 70S ribosome, L14 and L19 interact and together make contacts with the 16S rRNA in bridges B5 and B8.

Binds to 23S rRNA. Forms part of two intersubunit bridges in the 70S ribosome. The sequence is that of Large ribosomal subunit protein uL14 from Aliivibrio salmonicida (strain LFI1238) (Vibrio salmonicida (strain LFI1238)).